Reading from the N-terminus, the 242-residue chain is Probable transcriptional regulatory protein XCV3282 (242 aa).

It belongs to the TACO1 family.

The protein resides in the cytoplasm. The sequence is that of Probable transcriptional regulatory protein XCV3282 from Xanthomonas euvesicatoria pv. vesicatoria (strain 85-10) (Xanthomonas campestris pv. vesicatoria).